Reading from the N-terminus, the 574-residue chain is NEDD4-binding protein 2-like 2 (574 aa).

4 disordered regions span residues His82 to Ala110, Tyr127 to Asn161, Glu182 to Ser204, and Thr542 to Tyr574. 2 stretches are compositionally biased toward basic and acidic residues: residues Pro129–Glu141 and Asp149–Asn161. A coiled-coil region spans residues Ser162 to Glu196. Residues Gly563–Tyr574 show a composition bias toward polar residues.

The chain is NEDD4-binding protein 2-like 2 (N4bp2l2) from Rattus norvegicus (Rat).